Reading from the N-terminus, the 437-residue chain is tRNA-2-methylthio-N(6)-dimethylallyladenosine synthase (437 aa).

One can recognise an MTTase N-terminal domain in the interval 5-121 (KKLYIKTYGC…LPELTARAAT (117 aa)). Residues Cys14, Cys50, Cys84, Cys159, Cys163, and Cys166 each coordinate [4Fe-4S] cluster. The Radical SAM core domain maps to 145–371 (AKRGPTAFLT…QALLTRQQRA (227 aa)). In terms of domain architecture, TRAM spans 374–436 (DAKVGTTARV…ANSLRGVLIA (63 aa)).

Belongs to the methylthiotransferase family. MiaB subfamily. As to quaternary structure, monomer. [4Fe-4S] cluster serves as cofactor.

It localises to the cytoplasm. The enzyme catalyses N(6)-dimethylallyladenosine(37) in tRNA + (sulfur carrier)-SH + AH2 + 2 S-adenosyl-L-methionine = 2-methylsulfanyl-N(6)-dimethylallyladenosine(37) in tRNA + (sulfur carrier)-H + 5'-deoxyadenosine + L-methionine + A + S-adenosyl-L-homocysteine + 2 H(+). Functionally, catalyzes the methylthiolation of N6-(dimethylallyl)adenosine (i(6)A), leading to the formation of 2-methylthio-N6-(dimethylallyl)adenosine (ms(2)i(6)A) at position 37 in tRNAs that read codons beginning with uridine. The chain is tRNA-2-methylthio-N(6)-dimethylallyladenosine synthase from Dinoroseobacter shibae (strain DSM 16493 / NCIMB 14021 / DFL 12).